The primary structure comprises 218 residues: Glutathione S-transferase Y1 (218 aa).

The GST N-terminal domain occupies 2 to 88 (PMILGYWNVR…YIARKHNLCG (87 aa)). Glutathione contacts are provided by residues 7–8 (YW), 46–50 (WLNEK), 59–60 (NL), and 72–73 (QS). Residues 90 to 208 (TEEERIRVDI…KTSRFLRRPI (119 aa)) form the GST C-terminal domain. Tyrosine 116 lines the substrate pocket.

This sequence belongs to the GST superfamily. Mu family. In terms of assembly, homodimer.

The protein localises to the cytoplasm. The catalysed reaction is RX + glutathione = an S-substituted glutathione + a halide anion + H(+). In terms of biological role, conjugation of reduced glutathione to a wide number of exogenous and endogenous hydrophobic electrophiles. In Cricetulus longicaudatus (Long-tailed dwarf hamster), this protein is Glutathione S-transferase Y1.